The sequence spans 182 residues: Ribosome-recycling factor (182 aa).

The protein belongs to the RRF family.

The protein localises to the cytoplasm. Functionally, responsible for the release of ribosomes from messenger RNA at the termination of protein biosynthesis. May increase the efficiency of translation by recycling ribosomes from one round of translation to another. The chain is Ribosome-recycling factor from Prochlorococcus marinus (strain MIT 9312).